The following is a 194-amino-acid chain: Glycerol-3-phosphate acyltransferase (194 aa).

5 helical membrane-spanning segments follow: residues 7–27 (LLMA…YWVC), 59–79 (LTLF…AMLG), 86–106 (GVTA…HFKG), 116–136 (AGLA…AAVV), and 157–177 (AWRL…FILI).

This sequence belongs to the PlsY family. Probably interacts with PlsX.

The protein resides in the cell inner membrane. It catalyses the reaction an acyl phosphate + sn-glycerol 3-phosphate = a 1-acyl-sn-glycero-3-phosphate + phosphate. It participates in lipid metabolism; phospholipid metabolism. In terms of biological role, catalyzes the transfer of an acyl group from acyl-phosphate (acyl-PO(4)) to glycerol-3-phosphate (G3P) to form lysophosphatidic acid (LPA). This enzyme utilizes acyl-phosphate as fatty acyl donor, but not acyl-CoA or acyl-ACP. The chain is Glycerol-3-phosphate acyltransferase from Hahella chejuensis (strain KCTC 2396).